We begin with the raw amino-acid sequence, 419 residues long: MYEPTLTVESFDSELAGAIRDERRRQEHHVELIASENYVSPRVLELQGSVLTNKYAEGYPGRRYYGGCEFVDIAEQLAIDRAKELFGADYANVQPHSGSQANAEAYMALMNPGDTLLAMDLSHGGHLTHGSPVSFSGKFYKAVHYGLNAHGDIDYEQAAQLAQEHKPKVILAGFSAFSGIVDWQRFREIADSVNAYFMTDIAHVAGLVAAGVYPSPVQIADVTTTTTHKTLRGPRAGLILAKANPELEKRLNSAVFPGSQGGPLMHIIAAKAVAFKEAMQPEFKTYAQQILKNAKAMAEVMKERGYTIVSGGTQNHLFLVSLLDKNISGKEAEAALGRANITVNKNTVPGETRSPFVTSGLRIGTPAITTRGFKEKEASQLAHWVCDILDDIHNEKVIADVKQKAHELCGKFPVYQELD.

(6S)-5,6,7,8-tetrahydrofolate-binding positions include L121 and 125-127; that span reads GHL. K229 is modified (N6-(pyridoxal phosphate)lysine). 354–356 serves as a coordination point for (6S)-5,6,7,8-tetrahydrofolate; that stretch reads SPF.

It belongs to the SHMT family. As to quaternary structure, homodimer. Pyridoxal 5'-phosphate is required as a cofactor.

The protein localises to the cytoplasm. The enzyme catalyses (6R)-5,10-methylene-5,6,7,8-tetrahydrofolate + glycine + H2O = (6S)-5,6,7,8-tetrahydrofolate + L-serine. It participates in one-carbon metabolism; tetrahydrofolate interconversion. It functions in the pathway amino-acid biosynthesis; glycine biosynthesis; glycine from L-serine: step 1/1. Functionally, catalyzes the reversible interconversion of serine and glycine with tetrahydrofolate (THF) serving as the one-carbon carrier. This reaction serves as the major source of one-carbon groups required for the biosynthesis of purines, thymidylate, methionine, and other important biomolecules. Also exhibits THF-independent aldolase activity toward beta-hydroxyamino acids, producing glycine and aldehydes, via a retro-aldol mechanism. The chain is Serine hydroxymethyltransferase from Coxiella burnetii (strain RSA 493 / Nine Mile phase I).